The chain runs to 341 residues: HTH-type transcriptional repressor PurR (341 aa).

One can recognise an HTH lacI-type domain in the interval 2-56; the sequence is ATIKDVAKRANVSTTTVSHVINKTRFVAEETRNAVWAAIKELHYSPSAVARSLKV. Positions 4–23 form a DNA-binding region, H-T-H motif; that stretch reads IKDVAKRANVSTTTVSHVIN. Residues 48–56 mediate DNA binding; sequence SAVARSLKV. Positions 73, 190, 192, 221, and 275 each coordinate hypoxanthine.

In terms of assembly, homodimer.

The protein operates within purine metabolism; purine nucleotide biosynthesis [regulation]. Functionally, is the main repressor of the genes involved in the de novo synthesis of purine nucleotides, regulating purB, purC, purEK, purF, purHD, purL, purMN and guaBA expression. In addition, it participates in the regulation or coregulation of genes involved in de novo pyrimidine nucleotide biosynthesis, salvage and uptake (pyrC, pyrD, carAB and codBA), and of several genes encoding enzymes necessary for nucleotide and polyamine biosynthesis (prsA, glyA, gcvTHP, speA, glnB). Binds to a 16-bp palindromic sequence located within the promoter region of pur regulon genes. The consensus binding sequence is 5'-ACGCAAACGTTTTCNT-3'. PurR is allosterically activated to bind its cognate DNA by binding the purine corepressors, hypoxanthine or guanine, thereby effecting transcription repression. This chain is HTH-type transcriptional repressor PurR (purR), found in Escherichia coli (strain K12).